Consider the following 105-residue polypeptide: Phosphoribosyl-AMP cyclohydrolase (105 aa).

Residue D72 coordinates Mg(2+). Position 73 (C73) interacts with Zn(2+). Mg(2+) contacts are provided by D74 and D76. Zn(2+) is bound by residues C89 and C96.

The protein belongs to the PRA-CH family. Homodimer. Mg(2+) is required as a cofactor. Zn(2+) serves as cofactor.

The protein resides in the cytoplasm. It carries out the reaction 1-(5-phospho-beta-D-ribosyl)-5'-AMP + H2O = 1-(5-phospho-beta-D-ribosyl)-5-[(5-phospho-beta-D-ribosylamino)methylideneamino]imidazole-4-carboxamide. It functions in the pathway amino-acid biosynthesis; L-histidine biosynthesis; L-histidine from 5-phospho-alpha-D-ribose 1-diphosphate: step 3/9. Functionally, catalyzes the hydrolysis of the adenine ring of phosphoribosyl-AMP. The sequence is that of Phosphoribosyl-AMP cyclohydrolase from Listeria innocua serovar 6a (strain ATCC BAA-680 / CLIP 11262).